The following is a 441-amino-acid chain: Cysteine--tRNA ligase (441 aa).

Cys24 lines the Zn(2+) pocket. Residues 26–36 (PTVYNYIHIGN) carry the 'HIGH' region motif. Zn(2+)-binding residues include Cys204, His230, and Glu234. Positions 262–266 (KMSKS) match the 'KMSKS' region motif. Lys265 is an ATP binding site.

The protein belongs to the class-I aminoacyl-tRNA synthetase family. Monomer. Requires Zn(2+) as cofactor.

It is found in the cytoplasm. It catalyses the reaction tRNA(Cys) + L-cysteine + ATP = L-cysteinyl-tRNA(Cys) + AMP + diphosphate. The chain is Cysteine--tRNA ligase from Mycoplasma mycoides subsp. mycoides SC (strain CCUG 32753 / NCTC 10114 / PG1).